The sequence spans 141 residues: Large ribosomal subunit protein uL16 (141 aa).

It belongs to the universal ribosomal protein uL16 family. Part of the 50S ribosomal subunit.

Binds 23S rRNA and is also seen to make contacts with the A and possibly P site tRNAs. The protein is Large ribosomal subunit protein uL16 of Deinococcus geothermalis (strain DSM 11300 / CIP 105573 / AG-3a).